Reading from the N-terminus, the 374-residue chain is N-acetyldiaminopimelate deacetylase (374 aa).

The active site involves Asp69. Catalysis depends on Glu128, which acts as the Proton acceptor.

It belongs to the peptidase M20A family. N-acetyldiaminopimelate deacetylase subfamily.

The catalysed reaction is N-acetyl-(2S,6S)-2,6-diaminopimelate + H2O = (2S,6S)-2,6-diaminopimelate + acetate. It participates in amino-acid biosynthesis; L-lysine biosynthesis via DAP pathway; LL-2,6-diaminopimelate from (S)-tetrahydrodipicolinate (acetylase route): step 3/3. In terms of biological role, catalyzes the conversion of N-acetyl-diaminopimelate to diaminopimelate and acetate. This is N-acetyldiaminopimelate deacetylase (ykuR) from Bacillus subtilis (strain 168).